Reading from the N-terminus, the 260-residue chain is PsbP domain-containing protein 4, chloroplastic (260 aa).

This sequence belongs to the PsbP family.

Its subcellular location is the plastid. The protein resides in the chloroplast thylakoid lumen. The polypeptide is PsbP domain-containing protein 4, chloroplastic (PPD4) (Arabidopsis thaliana (Mouse-ear cress)).